We begin with the raw amino-acid sequence, 208 residues long: ATP-dependent Clp protease proteolytic subunit (208 aa).

Catalysis depends on Ser-106, which acts as the Nucleophile. The active site involves His-131.

It belongs to the peptidase S14 family. As to quaternary structure, fourteen ClpP subunits assemble into 2 heptameric rings which stack back to back to give a disk-like structure with a central cavity, resembling the structure of eukaryotic proteasomes.

The protein resides in the cytoplasm. The catalysed reaction is Hydrolysis of proteins to small peptides in the presence of ATP and magnesium. alpha-casein is the usual test substrate. In the absence of ATP, only oligopeptides shorter than five residues are hydrolyzed (such as succinyl-Leu-Tyr-|-NHMec, and Leu-Tyr-Leu-|-Tyr-Trp, in which cleavage of the -Tyr-|-Leu- and -Tyr-|-Trp bonds also occurs).. Cleaves peptides in various proteins in a process that requires ATP hydrolysis. Has a chymotrypsin-like activity. Plays a major role in the degradation of misfolded proteins. The protein is ATP-dependent Clp protease proteolytic subunit of Dinoroseobacter shibae (strain DSM 16493 / NCIMB 14021 / DFL 12).